The chain runs to 446 residues: MMGVNSSGRPDLYGHLHSILLPGRGLPDWSPDGGADPGVSTWTPRLLSGVPEVAASPSPSWDGTWDNVSGCGEQINYGRAEKVVIGSILTLITLLTIAGNCLVVISVCFVKKLRQPSNYLIVSLALADLSVAVAVIPFVSVTDLIGGKWIFGHFFCNVFIAMDVMCCTASIMTLCVISIDRYLGITRPLTYPVRQNGKCMPKMILSVWLLSASITLPPLFGWAQNVNDDKVCLISQDFGYTIYSTAVAFYIPMSVMLFMYYRIYKAARKSAAKHKFPGFPRVQPESIISLNGMVKLQKEVEECANLSRLLKHERKNISIFKREQKAATTLGIIVGAFTVCWLPFFLLSTARPFICGTACSCIPLWVERTCLWLGYANSLINPFIYAFFNRDLRTTYRSLLQCQYRNINRKLSAAGMHEALKLAERPERPECVLQNSDYCRKKGHDS.

Residues 1-84 (MMGVNSSGRP…INYGRAEKVV (84 aa)) lie on the Extracellular side of the membrane. N-linked (GlcNAc...) asparagine glycans are attached at residues asparagine 5 and asparagine 67. A helical transmembrane segment spans residues 85 to 109 (IGSILTLITLLTIAGNCLVVISVCF). Topologically, residues 110–119 (VKKLRQPSNY) are cytoplasmic. Residues 120 to 141 (LIVSLALADLSVAVAVIPFVSV) traverse the membrane as a helical segment. Residues 142–153 (TDLIGGKWIFGH) are Extracellular-facing. The helical transmembrane segment at 154-179 (FFCNVFIAMDVMCCTASIMTLCVISI) threads the bilayer. Cysteine 156 and cysteine 232 form a disulfide bridge. Serotonin is bound at residue aspartate 163. The Cytoplasmic portion of the chain corresponds to 180–199 (DRYLGITRPLTYPVRQNGKC). The chain crosses the membrane as a helical span at residues 200–220 (MPKMILSVWLLSASITLPPLF). Over 221 to 238 (GWAQNVNDDKVCLISQDF) the chain is Extracellular. Residues 239-261 (GYTIYSTAVAFYIPMSVMLFMYY) form a helical membrane-spanning segment. Topologically, residues 262–327 (RIYKAARKSA…SIFKREQKAA (66 aa)) are cytoplasmic. A helical membrane pass occupies residues 328–353 (TTLGIIVGAFTVCWLPFFLLSTARPF). Residues 354–364 (ICGTACSCIPL) are Extracellular-facing. A helical transmembrane segment spans residues 365–388 (WVERTCLWLGYANSLINPFIYAFF). Residues 389–446 (NRDLRTTYRSLLQCQYRNINRKLSAAGMHEALKLAERPERPECVLQNSDYCRKKGHDS) lie on the Cytoplasmic side of the membrane. Cysteine 402 is lipidated: S-palmitoyl cysteine.

It belongs to the G-protein coupled receptor 1 family.

Its subcellular location is the cell membrane. In terms of biological role, G-protein coupled receptor for 5-hydroxytryptamine (serotonin), a biogenic hormone that functions as a neurotransmitter, a hormone and a mitogen. Ligand binding causes a conformation change that triggers signaling via guanine nucleotide-binding proteins (G proteins) and modulates the activity of downstream effectors. HTR7 is coupled to G(s) G alpha proteins and mediates activation of adenylate cyclase activity. The protein is 5-hydroxytryptamine receptor 7 (HTR7) of Cavia porcellus (Guinea pig).